Here is a 602-residue protein sequence, read N- to C-terminus: uncharacterized protein (602 aa).

This sequence belongs to the IIV-6 098R family.

This is an uncharacterized protein from Acheta domesticus (House cricket).